Here is a 160-residue protein sequence, read N- to C-terminus: Vegetative-specific protein V4 (160 aa).

Repeat copies occupy residues 151–153 (NQP), 154–156 (NQP), and 157–159 (NQG). Residues 151-159 (NQPNQPNQG) are 3 X 3 AA tandem repeats of N-Q-[PG].

Unknown. Its expression during growth is not required for growth but for the proper initiation of development, therefore playing a role in the transition from growth to development. This is Vegetative-specific protein V4 (lmcB) from Dictyostelium discoideum (Social amoeba).